The following is a 629-amino-acid chain: Keratin, type II cytoskeletal 3 (629 aa).

The interval 1–182 (MNRQVCKTSG…DPQIGQVRAQ (182 aa)) is head. Serine 13 and serine 62 each carry phosphoserine. The segment at 183 to 218 (EREQIKTLNNKFASFIDKVRFLEQQNKVLETKWELL) is coil 1A. Residues 183 to 498 (EREQIKTLNN…KLLEGEESRM (316 aa)) form the IF rod domain. A linker 1 region spans residues 219–239 (QRQGPNSVTGTNNLEPLFENR). A coil 1B region spans residues 240–331 (INYLRSYLDS…TLYDAELSQM (92 aa)). Position 281 is an N6,N6-dimethyllysine (lysine 281). The interval 332 to 355 (QSHVSDMSVVLSMDNNRSLDLDSI) is linker 12. Serine 349 carries the phosphoserine modification. The coil 2 stretch occupies residues 356–494 (IAEVRAQYED…ATYRKLLEGE (139 aa)). Positions 495–629 (ESRMSGECQS…FSQSSQRYSR (135 aa)) are tail. The segment at 603-629 (SGGGFSSGSSSRGSSVKFSQSSQRYSR) is disordered. Over residues 618–629 (VKFSQSSQRYSR) the composition is skewed to polar residues.

The protein belongs to the intermediate filament family. Heterotetramer of two type I and two type II keratins. Keratin-3 associates with keratin-12. In terms of tissue distribution, cornea specific. Expressed in the basal cells of corneal epithelium and stroma. Also expressed in esophageal epithelium.

This Oryctolagus cuniculus (Rabbit) protein is Keratin, type II cytoskeletal 3 (KRT3).